Here is a 233-residue protein sequence, read N- to C-terminus: Large ribosomal subunit protein uL1 (233 aa).

Belongs to the universal ribosomal protein uL1 family. In terms of assembly, part of the 50S ribosomal subunit.

Binds directly to 23S rRNA. The L1 stalk is quite mobile in the ribosome, and is involved in E site tRNA release. Its function is as follows. Protein L1 is also a translational repressor protein, it controls the translation of the L11 operon by binding to its mRNA. The polypeptide is Large ribosomal subunit protein uL1 (Thermotoga sp. (strain RQ2)).